The primary structure comprises 427 residues: Hydroxylamine reductase (427 aa).

The [4Fe-4S] cluster site is built by cysteine 3, cysteine 6, cysteine 15, and cysteine 21. Hybrid [4Fe-2O-2S] cluster is bound by residues histidine 129, glutamate 153, cysteine 197, cysteine 283, cysteine 311, cysteine 336, glutamate 370, and lysine 372. Cysteine persulfide is present on cysteine 283.

It belongs to the HCP family. [4Fe-4S] cluster is required as a cofactor. The cofactor is hybrid [4Fe-2O-2S] cluster.

The protein localises to the cytoplasm. It catalyses the reaction A + NH4(+) + H2O = hydroxylamine + AH2 + H(+). Catalyzes the reduction of hydroxylamine to form NH(3) and H(2)O. The chain is Hydroxylamine reductase from Moorella thermoacetica (strain ATCC 39073 / JCM 9320).